The primary structure comprises 149 residues: Transcriptional repressor NrdR (149 aa).

Residues 3–34 fold into a zinc finger; sequence CPFCCAVDTKVIDSRLVGEGSSVRRRRQCVVC. The ATP-cone domain maps to 49–139; sequence PRVVKSNDVR…VYRSFEDIRE (91 aa).

It belongs to the NrdR family. The cofactor is Zn(2+).

Its function is as follows. Negatively regulates transcription of bacterial ribonucleotide reductase nrd genes and operons by binding to NrdR-boxes. The polypeptide is Transcriptional repressor NrdR (Erwinia tasmaniensis (strain DSM 17950 / CFBP 7177 / CIP 109463 / NCPPB 4357 / Et1/99)).